Here is a 346-residue protein sequence, read N- to C-terminus: Putative D-xylulose reductase (346 aa).

Residues Cys-39, His-64, and Glu-150 each contribute to the Zn(2+) site.

It belongs to the zinc-containing alcohol dehydrogenase family. Zn(2+) serves as cofactor.

The enzyme catalyses xylitol + NAD(+) = D-xylulose + NADH + H(+). The chain is Putative D-xylulose reductase from Rhizobium meliloti (strain 1021) (Ensifer meliloti).